The following is a 91-amino-acid chain: Probable Fe(2+)-trafficking protein (91 aa).

It belongs to the Fe(2+)-trafficking protein family. In terms of assembly, monomer.

Its function is as follows. Could be a mediator in iron transactions between iron acquisition and iron-requiring processes, such as synthesis and/or repair of Fe-S clusters in biosynthetic enzymes. This Escherichia coli O7:K1 (strain IAI39 / ExPEC) protein is Probable Fe(2+)-trafficking protein.